Reading from the N-terminus, the 20-residue chain is MKVYTDIFTRDEFLSDSYPM.

The 20-residue stretch at 1 to 20 (MKVYTDIFTRDEFLSDSYPM) folds into the TCTP domain.

Belongs to the TCTP family.

The sequence is that of Unknown protein NF040 from 2D-PAGE from Naegleria fowleri (Brain eating amoeba).